Here is a 323-residue protein sequence, read N- to C-terminus: Vertebrate ancient opsin (323 aa).

The Extracellular portion of the chain corresponds to 1 to 38 (MDTLRIAVNGVSYNEASEIYKPHADPFTGPITNLAPWN). Residues 39-63 (FAVLATLMFVITSLSLFENFTVMLA) form a helical membrane-spanning segment. Residues 64–75 (TYKFKQLRQPLN) are Cytoplasmic-facing. Residues 76–100 (YIIVNLSLADFLVSLTGGTISFLTN) form a helical membrane-spanning segment. The Extracellular segment spans residues 101–115 (ARGYFFLGNWACVLE). Cys-112 and Cys-189 are disulfide-bonded. The chain crosses the membrane as a helical span at residues 116 to 135 (GFAVTYFGIVAMWSLAVLSF). Over 136 to 154 (ERYFVICRPLGNVRLRGKH) the chain is Cytoplasmic. The helical transmembrane segment at 155-178 (AALGLLFVWTFSFIWTIPPVFGWC) threads the bilayer. At 179 to 202 (SYTVSKIGTTCEPNWYSNNIWNHT) the chain is on the extracellular side. The N-linked (GlcNAc...) asparagine glycan is linked to Asn-200. Residues 203–230 (YIITFFVTCFIMPLGMIIYCYGKLLQKL) form a helical membrane-spanning segment. At 231–250 (RKVSHDRLGNAKKPERQVSR) the chain is on the cytoplasmic side. A helical membrane pass occupies residues 251 to 274 (MVVVMIVAYLVGWTPYAAFSIIVT). The Extracellular segment spans residues 275-282 (ACPTIYLD). A helical transmembrane segment spans residues 283–307 (PRLAAAPAFFSKTAAVYNPVIYVFM). Lys-294 is subject to N6-(retinylidene)lysine. Residues 308 to 323 (NKQVSTQLNWGFWSRA) are Cytoplasmic-facing.

It belongs to the G-protein coupled receptor 1 family. Opsin subfamily. Post-translationally, phosphorylated on some or all of the serine and threonine residues present in the C-terminal region.

Its subcellular location is the membrane. The chain is Vertebrate ancient opsin from Salmo salar (Atlantic salmon).